Here is a 146-residue protein sequence, read N- to C-terminus: Hemoglobin subunit beta (146 aa).

Residue valine 1 is modified to N-acetylvaline. The 145-residue stretch at 2–146 folds into the Globin domain; it reads HLTDAEKAAI…VATALGHKYH (145 aa). An N6-acetyllysine modification is found at lysine 59. Histidine 63 serves as a coordination point for heme b. Residue lysine 82 is modified to N6-acetyllysine. Position 92 (histidine 92) interacts with heme b. S-nitrosocysteine is present on cysteine 93. N6-acetyllysine is present on lysine 144.

The protein belongs to the globin family. As to quaternary structure, heterotetramer of two alpha chains and two beta chains. In terms of tissue distribution, red blood cells.

Functionally, involved in oxygen transport from the lung to the various peripheral tissues. This is Hemoglobin subunit beta (HBB) from Ondatra zibethicus (Muskrat).